A 168-amino-acid chain; its full sequence is MASGVMVSDDVVKVFNDMKVRHQLSPEEAKKRKKAVIFCLSDDKKTIILEPGKEILQGDVGCNVEDPYKTFVKMLPRNDCRYALYDALYETKETKKEDLVFVFWAPEEASLKSKMIYASSKDAIRKRFTGIKHEWQTNTYDDINDPCNLADKLGGNTVVSLEGKSLRS.

Position 2 is an N-acetylalanine (A2). In terms of domain architecture, ADF-H spans 4-153; it reads GVMVSDDVVK…NDPCNLADKL (150 aa). Positions 30-34 match the Nuclear localization signal motif; it reads KKRKK.

This sequence belongs to the actin-binding proteins ADF family. Post-translationally, inactive when phosphorylated. Phosphorylation levels vary during development. Oocytes contain only the phosphorylated form, and 80-95% of cfl1 protein is phosphorylated in unfertilized eggs. Rapid dephosphorylation occurs within 30 minutes after fertilization. Phosphorylation levels increase again between the morula and blastula stages (5-8 hpf) and then decrease again as gastrulation approaches. Dephosphorylated by pdxp. In terms of tissue distribution, expressed diffusely in both animal and vegetal hemispheres of the oocyte. During cleavage, expression accumulates around the cleavage furrow, along the vegetal membrane, and later in the midbody. Strongly expressed in the animal hemisphere during blastula stages, with most cells showing expression by gastrulation. By stage 17, expression is highest in cells of the developing neuroectoderm, and at stage 24 the notochord, neural tube, neural crest, somites and some cells of the archenteron show high expression. By stage 35, expression has declined in the notochord, but remains in the neural tube, epidermis and a layer of cells in the archenteron. Also highly expressed in the retina and neuronal cell bodies at the base of the cement gland but not the cement gland itself. At stage 38, expression is widespread, being highest in the nervous system and retina. In the adult, expression is high in the brain, heart, oocyte, stomach, and low in skeletal muscle.

The protein localises to the nucleus matrix. It is found in the cytoplasm. It localises to the cytoskeleton. Its subcellular location is the cell cortex. The protein resides in the membrane. In terms of biological role, may play a role in the regulation of cell morphology and cytoskeletal organization. Binds to F-actin and exhibits pH-sensitive F-actin depolymerizing activity. Required for formation of the cleavage furrow during cytokinesis. The polypeptide is Cofilin-1-B (cfl1-b) (Xenopus laevis (African clawed frog)).